Consider the following 289-residue polypeptide: Phosphoribulokinase (289 aa).

12–20 contributes to the ATP binding site; that stretch reads GSSGAGTTT.

Belongs to the phosphoribulokinase family.

It carries out the reaction D-ribulose 5-phosphate + ATP = D-ribulose 1,5-bisphosphate + ADP + H(+). Its pathway is carbohydrate biosynthesis; Calvin cycle. This Sinorhizobium medicae (strain WSM419) (Ensifer medicae) protein is Phosphoribulokinase (cbbP).